The primary structure comprises 659 residues: tRNA 5-methylaminomethyl-2-thiouridine biosynthesis bifunctional protein MnmC (659 aa).

Residues 1–236 (MKPVMPHAQL…KWEILRGEFL (236 aa)) form a tRNA (mnm(5)s(2)U34)-methyltransferase region. The segment at 267–659 (IGAGLAGCAT…FALRRLIRGK (393 aa)) is FAD-dependent cmnm(5)s(2)U34 oxidoreductase.

The protein in the N-terminal section; belongs to the methyltransferase superfamily. tRNA (mnm(5)s(2)U34)-methyltransferase family. It in the C-terminal section; belongs to the DAO family. FAD is required as a cofactor.

It is found in the cytoplasm. The enzyme catalyses 5-aminomethyl-2-thiouridine(34) in tRNA + S-adenosyl-L-methionine = 5-methylaminomethyl-2-thiouridine(34) in tRNA + S-adenosyl-L-homocysteine + H(+). Its function is as follows. Catalyzes the last two steps in the biosynthesis of 5-methylaminomethyl-2-thiouridine (mnm(5)s(2)U) at the wobble position (U34) in tRNA. Catalyzes the FAD-dependent demodification of cmnm(5)s(2)U34 to nm(5)s(2)U34, followed by the transfer of a methyl group from S-adenosyl-L-methionine to nm(5)s(2)U34, to form mnm(5)s(2)U34. The chain is tRNA 5-methylaminomethyl-2-thiouridine biosynthesis bifunctional protein MnmC from Pseudomonas fluorescens (strain Pf0-1).